The sequence spans 406 residues: Type IV pilus assembly protein PilC (406 aa).

4 helical membrane passes run 69-91 (IFSR…LAIL), 171-191 (YPVI…TGIV), 211-231 (FLIA…LLAV), and 377-397 (MIIF…LPLF).

It belongs to the GSP F family. Homotetramer. Interacts with PilB.

It is found in the cell inner membrane. Its function is as follows. Essential inner membrane component of the type IV pilus (T4P) that plays a role in surface and host cell adhesion, colonization, biofilm maturation, virulence, and twitching, a form of surface-associated motility facilitated by cycles of extension, adhesion, and retraction of T4P fibers. Controls both pilus assembly and disassembly and plays an important role in PilB localization to the complex and ATPase activity. This is Type IV pilus assembly protein PilC from Thermus thermophilus (strain ATCC 27634 / DSM 579 / HB8).